We begin with the raw amino-acid sequence, 78 residues long: Large ribosomal subunit protein bL28 (78 aa).

Residues 1–21 (MSRVCQVTGKRPVSGNNRSHA) are disordered.

The protein belongs to the bacterial ribosomal protein bL28 family.

The polypeptide is Large ribosomal subunit protein bL28 (Yersinia enterocolitica serotype O:8 / biotype 1B (strain NCTC 13174 / 8081)).